The primary structure comprises 389 residues: Phosphoglycerate kinase (389 aa).

Residues 21–23 (DLN), R36, 59–62 (HLGR), R112, and R145 contribute to the substrate site. ATP contacts are provided by residues K196, E313, and 342–345 (GGDT).

This sequence belongs to the phosphoglycerate kinase family. In terms of assembly, monomer.

Its subcellular location is the cytoplasm. The catalysed reaction is (2R)-3-phosphoglycerate + ATP = (2R)-3-phospho-glyceroyl phosphate + ADP. It participates in carbohydrate degradation; glycolysis; pyruvate from D-glyceraldehyde 3-phosphate: step 2/5. This chain is Phosphoglycerate kinase, found in Mannheimia succiniciproducens (strain KCTC 0769BP / MBEL55E).